A 664-amino-acid chain; its full sequence is Intraflagellar transport protein 70A2 (664 aa).

TPR repeat units lie at residues 11–44 (DGEFTAVVYRLIRDSRYSEAVQLLSAELQRSSRS), 45–78 (RAGLSLLAYCYYRLQEFELAAECYEQLSQMHPEL), 153–186 (PDGLVNMGCLLYKEGHYEAACSKFFAALQASGYQ), 188–220 (DVSYNLALACYSNRHYAPALKHIANIIERGIRQ), 395–423 (QVQEARHNRDDEVVIKAVNEYDETLEKYI), 424–456 (PVLMAQAKIYWNLENYPMVEKIFRKSVEFCNDH), and 458–491 (VWKLNVAHVLFMQENKYKEAIGFYEPIVKKNYDN). The stretch at 507-534 (YIMTSQNEEAEELMRKIEKEEEQLSYGD) forms a coiled coil. Residues 543-576 (CIVNLVIGTLYCAKGNYDFGISRVIKSLEPYHKK) form a TPR 8 repeat.

Belongs to the TTC30/dfy-1/fleer family. In terms of assembly, interacts wit the IFT B complex component IFT52.

The protein resides in the cell projection. It localises to the cilium. In terms of biological role, required for polyglutamylation of axonemal tubulin. Plays a role in anterograde intraflagellar transport (IFT), the process by which cilia precursors are transported from the base of the cilium to the site of their incorporation at the tip. The protein is Intraflagellar transport protein 70A2 (Ift70a2) of Mus musculus (Mouse).